Consider the following 258-residue polypeptide: Dehydrodolichyl diphosphate synthase complex subunit nus1 (258 aa).

Residues 5–21 traverse the membrane as a helical segment; it reads IFFYLALWVIQSVYGAW.

This sequence belongs to the UPP synthase family. Forms an active dehydrodolichyl diphosphate synthase complex with SPAC4D7.04c. The cofactor is Mg(2+).

Its subcellular location is the endoplasmic reticulum membrane. The enzyme catalyses n isopentenyl diphosphate + (2E,6E)-farnesyl diphosphate = a di-trans,poly-cis-polyprenyl diphosphate + n diphosphate. It participates in protein modification; protein glycosylation. In terms of biological role, with SPAC4D7.04c, forms the dehydrodolichyl diphosphate synthase (DDS) complex, an essential component of the dolichol monophosphate (Dol-P) biosynthetic machinery. Adds multiple copies of isopentenyl pyrophosphate (IPP) to farnesyl pyrophosphate (FPP) to produce dehydrodolichyl diphosphate (Dedol-PP), a precursor of dolichol which is utilized as a sugar carrier in protein glycosylation in the endoplasmic reticulum (ER). The polypeptide is Dehydrodolichyl diphosphate synthase complex subunit nus1 (nus1) (Schizosaccharomyces pombe (strain 972 / ATCC 24843) (Fission yeast)).